Here is an 883-residue protein sequence, read N- to C-terminus: Phosphoenolpyruvate carboxylase (883 aa).

Catalysis depends on residues His-138 and Lys-546.

It belongs to the PEPCase type 1 family. The cofactor is Mg(2+).

It carries out the reaction oxaloacetate + phosphate = phosphoenolpyruvate + hydrogencarbonate. In terms of biological role, forms oxaloacetate, a four-carbon dicarboxylic acid source for the tricarboxylic acid cycle. The sequence is that of Phosphoenolpyruvate carboxylase from Enterobacter sp. (strain 638).